The sequence spans 158 residues: MSNNIPLTKESYEALQEELKRLIREERPKVIQDIAEARSHGDLSENAEYDAAKNRQGFIEGRIQELQGKLARAHVVDLTGLKPDKVVFGATVTLYDTASEEEITYKIVGEDEADIKLGKISCTSPVGKALIGHKLDDSVKVKVPAGTKEYEIIEIKYE.

Residues Met-1–Gln-67 are a coiled coil.

It belongs to the GreA/GreB family.

Functionally, necessary for efficient RNA polymerase transcription elongation past template-encoded arresting sites. The arresting sites in DNA have the property of trapping a certain fraction of elongating RNA polymerases that pass through, resulting in locked ternary complexes. Cleavage of the nascent transcript by cleavage factors such as GreA or GreB allows the resumption of elongation from the new 3'terminus. GreA releases sequences of 2 to 3 nucleotides. In Trichlorobacter lovleyi (strain ATCC BAA-1151 / DSM 17278 / SZ) (Geobacter lovleyi), this protein is Transcription elongation factor GreA.